A 339-amino-acid polypeptide reads, in one-letter code: Quinolinate synthase (339 aa).

Iminosuccinate contacts are provided by H63 and S81. C126 contributes to the [4Fe-4S] cluster binding site. Iminosuccinate contacts are provided by residues 152-154 (YVN) and S169. [4Fe-4S] cluster is bound at residue C211. Iminosuccinate-binding positions include 237–239 (HPE) and T254. [4Fe-4S] cluster is bound at residue C297.

The protein belongs to the quinolinate synthase family. Type 2 subfamily. [4Fe-4S] cluster is required as a cofactor.

Its subcellular location is the cytoplasm. The catalysed reaction is iminosuccinate + dihydroxyacetone phosphate = quinolinate + phosphate + 2 H2O + H(+). It participates in cofactor biosynthesis; NAD(+) biosynthesis; quinolinate from iminoaspartate: step 1/1. In terms of biological role, catalyzes the condensation of iminoaspartate with dihydroxyacetone phosphate to form quinolinate. The chain is Quinolinate synthase from Xylella fastidiosa (strain 9a5c).